Here is a 150-residue protein sequence, read N- to C-terminus: Thyroid hormone-inducible hepatic protein (150 aa).

The interval 83 to 105 (KVAGNEGSEAENEAAETEEAEED) is disordered. S90 carries the post-translational modification Phosphoserine. Acidic residues predominate over residues 90–105 (SEAENEAAETEEAEED).

This sequence belongs to the SPOT14 family. Homodimer. Heterodimer with MID1IP1. Interacts with THRB and PLAGL1. In terms of tissue distribution, highly expressed in liver, lactating mammary gland, epididymal, retroperitoneal and brown fat. Mainly expressed in tissues that synthesize triglycerides.

Its subcellular location is the nucleus. The protein resides in the cytoplasm. Plays a role in the regulation of lipogenesis, especially in lactating mammary gland. Important for the biosynthesis of triglycerides with medium-length fatty acid chains. May modulate lipogenesis by interacting with MID1IP1 and preventing its interaction with ACACA. May function as transcriptional coactivator. May modulate the transcription factor activity of THRB. This is Thyroid hormone-inducible hepatic protein (Thrsp) from Rattus norvegicus (Rat).